Reading from the N-terminus, the 228-residue chain is CD9 antigen (228 aa).

The Cytoplasmic portion of the chain corresponds to M1–Y12. Residue C9 is the site of S-palmitoyl cysteine attachment. A helical transmembrane segment spans residues L13–L33. At W34–S55 the chain is on the extracellular side. N-linked (GlcNAc...) asparagine glycosylation is found at N52 and N53. The helical transmembrane segment at F56–L76 threads the bilayer. Topologically, residues G77–C87 are cytoplasmic. 3 S-palmitoyl cysteine lipidation sites follow: C78, C79, and C87. The helical transmembrane segment at M88–Y111 threads the bilayer. Residues S112 to I195 lie on the Extracellular side of the membrane. 2 disulfide bridges follow: C152-C181 and C153-C167. The helical transmembrane segment at I196–I221 threads the bilayer. S-palmitoyl cysteine attachment occurs at residues C218 and C219. Residues R222–V228 are Cytoplasmic-facing.

This sequence belongs to the tetraspanin (TM4SF) family. Forms both disulfide-linked homodimers and higher homooligomers as well as heterooligomers with other members of the tetraspanin family. Interacts (via the second extracellular domain) with integrin ITGAV:ITGB3. Interacts with integrin ITGA6:ITGB1; interaction takes place in oocytes and is involved in sperm-egg fusion. Part of integrin-tetraspanin complexes composed of CD81, beta-1 and beta-2 integrins in the membrane of monocyte/macrophages. Interacts with CD63; identified in a complex with CD63 and ITGB3. Associates with CR2/CD21 and with PTGFRN/CD9P1. Part of a complex composed of CD9, CD81, PTGFRN and IGSF8. Interacts directly with IGSF8. Interacts with PDPN; this interaction is homophilic and attenuates platelet aggregation and pulmonary metastasis induced by PDPN. Interacts (on T cell side) with CD81 at immunological synapses between antigen-presenting cells and T cells. In terms of processing, palmitoylated at a low, basal level in unstimulated platelets. The level of palmitoylation increases when platelets are activated by thrombin (in vitro). The protein exists in three forms with molecular masses between 22 and 27 kDa, and is known to carry covalently linked fatty acids. Palmitoylation by ZDHHC2 regulates CD9 expression, association with other tetraspanin family proteins and function in cell adhesion.

The protein resides in the cell membrane. Its subcellular location is the membrane. It is found in the secreted. It localises to the extracellular exosome. Integral membrane protein associated with integrins, which regulates different processes, such as sperm-egg fusion, platelet activation and aggregation, and cell adhesion. Present at the cell surface of oocytes and plays a key role in sperm-egg fusion, possibly by organizing multiprotein complexes and the morphology of the membrane required for the fusion. In myoblasts, associates with CD81 and PTGFRN and inhibits myotube fusion during muscle regeneration. In macrophages, associates with CD81 and beta-1 and beta-2 integrins, and prevents macrophage fusion into multinucleated giant cells specialized in ingesting complement-opsonized large particles. Also prevents the fusion between mononuclear cell progenitors into osteoclasts in charge of bone resorption. Acts as a receptor for PSG17. Involved in platelet activation and aggregation. Regulates paranodal junction formation. Involved in cell adhesion, cell motility and tumor metastasis. This chain is CD9 antigen, found in Chlorocebus aethiops (Green monkey).